Reading from the N-terminus, the 694-residue chain is Glycine--tRNA ligase beta subunit (694 aa).

Belongs to the class-II aminoacyl-tRNA synthetase family. Tetramer of two alpha and two beta subunits.

The protein localises to the cytoplasm. It carries out the reaction tRNA(Gly) + glycine + ATP = glycyl-tRNA(Gly) + AMP + diphosphate. The polypeptide is Glycine--tRNA ligase beta subunit (Shewanella denitrificans (strain OS217 / ATCC BAA-1090 / DSM 15013)).